We begin with the raw amino-acid sequence, 1107 residues long: Copine family protein 1 (1107 aa).

At 1–22 (MVFDARLGYDPDEWEECPEPEH) the chain is on the extracellular side. The helical transmembrane segment at 23 to 45 (FLVFSGFTRYMLTFAAIAFVYYF) threads the bilayer. The Cytoplasmic portion of the chain corresponds to 46 to 1107 (FKLLDDKNKK…IRREMMHNPL (1062 aa)). A coiled-coil region spans residues 67 to 124 (VESVLAKAGDKLHDVKEQVQQHIPESAEELMREADQYLKEQAHSVQNNVHQFAEQAAN). Residues 478–488 (QLQQNQQQHQQ) are compositionally biased toward low complexity. Disordered regions lie at residues 478-501 (QLQQ…TADS) and 673-698 (HEPE…SRQV). A compositionally biased stretch (basic and acidic residues) spans 492–501 (IDRRRTTADS). Over residues 687-698 (KNPSFEATSRQV) the composition is skewed to polar residues. The region spanning 863–1023 (NLIFGIDYTA…LSIIVVGVGD (161 aa)) is the VWFA domain.

This sequence belongs to the copine family. May interact (via VWFA domain) with unc-89 (via Ig-like C2-type 1-3) and unc-96 (via C-terminus); cpna-1 binding sites for unc-89 and unc-96 are different. May interact with pat-6. May interact with lim-9 (via LIM domains) and with scpl-1 (via FCP1 homology domain). In terms of tissue distribution, expressed in body wall muscles (at protein level).

The protein localises to the basal cell membrane. It localises to the cytoplasm. It is found in the myofibril. Its subcellular location is the sarcomere. The protein resides in the m line. In terms of biological role, involved in the assembly of dense bodies and M lines during body wall muscle development. Acts by recruiting downstream of integrin-associated protein pat-6/actopaxin several dense bodies and M line components including unc-89, lim-9, scpl-1 and unc-96 to integrin-mediated attachment sites. The sequence is that of Copine family protein 1 from Caenorhabditis elegans.